Here is a 418-residue protein sequence, read N- to C-terminus: Glutamyl-tRNA reductase (418 aa).

Substrate is bound by residues 49 to 52 (TCNR), S108, 113 to 115 (EPQ), and Q119. Residue C50 is the Nucleophile of the active site. NADP(+) is bound at residue 188–193 (GAGETI).

The protein belongs to the glutamyl-tRNA reductase family. As to quaternary structure, homodimer.

It catalyses the reaction (S)-4-amino-5-oxopentanoate + tRNA(Glu) + NADP(+) = L-glutamyl-tRNA(Glu) + NADPH + H(+). It functions in the pathway porphyrin-containing compound metabolism; protoporphyrin-IX biosynthesis; 5-aminolevulinate from L-glutamyl-tRNA(Glu): step 1/2. Catalyzes the NADPH-dependent reduction of glutamyl-tRNA(Glu) to glutamate 1-semialdehyde (GSA). The sequence is that of Glutamyl-tRNA reductase from Aliivibrio fischeri (strain ATCC 700601 / ES114) (Vibrio fischeri).